The sequence spans 279 residues: Oxygen-dependent coproporphyrinogen-III oxidase (279 aa).

Residue serine 102 participates in substrate binding. A divalent metal cation-binding residues include histidine 106 and histidine 116. Histidine 116 acts as the Proton donor in catalysis. Residue 118 to 120 (NTR) participates in substrate binding. A divalent metal cation-binding residues include histidine 149 and histidine 179. Residues 244-279 (YVEFNLLYDRGTKFGLMTDGNVEAILMSLPPEVKFN) are important for dimerization.

This sequence belongs to the aerobic coproporphyrinogen-III oxidase family. As to quaternary structure, homodimer. Requires a divalent metal cation as cofactor.

It localises to the cytoplasm. It carries out the reaction coproporphyrinogen III + O2 + 2 H(+) = protoporphyrinogen IX + 2 CO2 + 2 H2O. It participates in porphyrin-containing compound metabolism; protoporphyrin-IX biosynthesis; protoporphyrinogen-IX from coproporphyrinogen-III (O2 route): step 1/1. Involved in the heme biosynthesis. Catalyzes the aerobic oxidative decarboxylation of propionate groups of rings A and B of coproporphyrinogen-III to yield the vinyl groups in protoporphyrinogen-IX. The protein is Oxygen-dependent coproporphyrinogen-III oxidase of Rickettsia akari (strain Hartford).